The chain runs to 432 residues: Probable M18 family aminopeptidase 2 (432 aa).

Zn(2+) contacts are provided by histidine 86, histidine 157, and histidine 408.

The protein belongs to the peptidase M18 family. Requires Zn(2+) as cofactor.

This chain is Probable M18 family aminopeptidase 2 (apeB), found in Streptomyces coelicolor (strain ATCC BAA-471 / A3(2) / M145).